A 527-amino-acid polypeptide reads, in one-letter code: Amine oxidase [flavin-containing] A (527 aa).

The residue at position 1 (Met-1) is an N-acetylmethionine. Over 1 to 497 (MESLQKTSDA…PSFWERNLPS (497 aa)) the chain is Cytoplasmic. Ser-383 carries the post-translational modification Phosphoserine. Cys-406 bears the S-8alpha-FAD cysteine mark. The helical; Anchor for type IV membrane protein transmembrane segment at 498 to 518 (VSGLLKIVGFSTSITALWFVM) threads the bilayer. The Mitochondrial intermembrane segment spans residues 519-527 (YRFRLLSRS). The segment at 520–522 (RFR) is interaction with membrane phospholipid headgroups.

The protein belongs to the flavin monoamine oxidase family. In terms of assembly, monomer, homo- or heterodimer (containing two subunits of similar size). Each subunit contains a covalently bound flavin. Enzymatically active as monomer. Requires FAD as cofactor.

Its subcellular location is the mitochondrion outer membrane. It catalyses the reaction a secondary aliphatic amine + O2 + H2O = a primary amine + an aldehyde + H2O2. It carries out the reaction a primary methyl amine + O2 + H2O = an aldehyde + H2O2 + NH4(+). The enzyme catalyses (R)-adrenaline + O2 + H2O = (R)-3,4-dihydroxymandelaldehyde + methylamine + H2O2. The catalysed reaction is dopamine + O2 + H2O = 3,4-dihydroxyphenylacetaldehyde + H2O2 + NH4(+). It catalyses the reaction tyramine + O2 + H2O = (4-hydroxyphenyl)acetaldehyde + H2O2 + NH4(+). It carries out the reaction (R)-noradrenaline + O2 + H2O = (R)-3,4-dihydroxymandelaldehyde + H2O2 + NH4(+). The enzyme catalyses serotonin + O2 + H2O = (5-hydroxyindol-3-yl)acetaldehyde + H2O2 + NH4(+). The catalysed reaction is kynuramine + O2 + H2O = 3-(2-aminophenyl)-3-oxopropanal + H2O2 + NH4(+). It catalyses the reaction tryptamine + O2 + H2O = indole-3-acetaldehyde + H2O2 + NH4(+). It carries out the reaction 2-phenylethylamine + O2 + H2O = 2-phenylacetaldehyde + H2O2 + NH4(+). In terms of biological role, catalyzes the oxidative deamination of primary and some secondary amine such as neurotransmitters, with concomitant reduction of oxygen to hydrogen peroxide and has important functions in the metabolism of neuroactive and vasoactive amines in the central nervous system and peripheral tissues. Preferentially oxidizes serotonin. Also catalyzes the oxidative deamination of kynuramine to 3-(2-aminophenyl)-3-oxopropanal that can spontaneously condense to 4-hydroxyquinoline. The sequence is that of Amine oxidase [flavin-containing] A from Bos taurus (Bovine).